The chain runs to 356 residues: Phosphoribosylformylglycinamidine cyclo-ligase (356 aa).

The protein belongs to the AIR synthase family.

It is found in the cytoplasm. It carries out the reaction 2-formamido-N(1)-(5-O-phospho-beta-D-ribosyl)acetamidine + ATP = 5-amino-1-(5-phospho-beta-D-ribosyl)imidazole + ADP + phosphate + H(+). It participates in purine metabolism; IMP biosynthesis via de novo pathway; 5-amino-1-(5-phospho-D-ribosyl)imidazole from N(2)-formyl-N(1)-(5-phospho-D-ribosyl)glycinamide: step 2/2. The polypeptide is Phosphoribosylformylglycinamidine cyclo-ligase (Nitrobacter hamburgensis (strain DSM 10229 / NCIMB 13809 / X14)).